The primary structure comprises 516 residues: Cytochrome P450 6d1 (516 aa).

Residue Cys461 coordinates heme.

Belongs to the cytochrome P450 family. Heme is required as a cofactor.

It is found in the endoplasmic reticulum membrane. The protein localises to the microsome membrane. Metabolizes pyrethroid insecticides and other xenobiotics. The polypeptide is Cytochrome P450 6d1 (CYP6D1) (Musca domestica (House fly)).